The following is an 816-amino-acid chain: Endo-acting ulvan lyase (816 aa).

A signal peptide spans 1–23 (MGTSVRRISVVLMMLFGTNFCWS).

This sequence belongs to the polysaccharide lyase family.

The protein resides in the cell surface. It localises to the periplasm. Ulvan lyase involved in ulvan degradation. Ulvan is the main polysaccharide component of the Ulvales (green seaweed) cell wall. It is composed of disaccharide building blocks comprising 3-sulfated rhamnose (Rha3S) linked to D-glucuronic acid (GlcA), L-iduronic acid (IduA), or D-xylose (Xyl). Ulvan lyase catalyzes the endolytic cleavage of the glycosidic bond between Rha3S and the uronic acids GlcA or IduA, producing oligosaccharides that have unsaturated 4-deoxy-L-threo-hex-4-enopyranosiduronic acid (deltaUA) at the non-reducing end. This results eventually in the degradation of the ulvan polysaccharide into deltaUA-Rha3S disaccharides and deltaUA-Rha3S-Xyl-Rha3S tetrasaccharides. This Formosa agariphila (strain DSM 15362 / KCTC 12365 / LMG 23005 / KMM 3901 / M-2Alg 35-1) protein is Endo-acting ulvan lyase.